We begin with the raw amino-acid sequence, 572 residues long: Proline--tRNA ligase (572 aa).

Belongs to the class-II aminoacyl-tRNA synthetase family. ProS type 1 subfamily. As to quaternary structure, homodimer.

The protein localises to the cytoplasm. It catalyses the reaction tRNA(Pro) + L-proline + ATP = L-prolyl-tRNA(Pro) + AMP + diphosphate. Functionally, catalyzes the attachment of proline to tRNA(Pro) in a two-step reaction: proline is first activated by ATP to form Pro-AMP and then transferred to the acceptor end of tRNA(Pro). As ProRS can inadvertently accommodate and process non-cognate amino acids such as alanine and cysteine, to avoid such errors it has two additional distinct editing activities against alanine. One activity is designated as 'pretransfer' editing and involves the tRNA(Pro)-independent hydrolysis of activated Ala-AMP. The other activity is designated 'posttransfer' editing and involves deacylation of mischarged Ala-tRNA(Pro). The misacylated Cys-tRNA(Pro) is not edited by ProRS. The sequence is that of Proline--tRNA ligase from Citrobacter koseri (strain ATCC BAA-895 / CDC 4225-83 / SGSC4696).